The sequence spans 425 residues: Succinate--CoA ligase [ADP-forming] subunit beta, mitochondrial (425 aa).

Residues 1–14 (NNHGLQIQQQQQRN) constitute a mitochondrion transit peptide. An ATP-grasp domain is found at 23 to 250 (MELLQEAGVS…SNSAYRQKKI (228 aa)). At K40 the chain carries N6-acetyllysine. Y46 carries the phosphotyrosine modification. Position 50 is an N6-acetyllysine; alternate (K50). K50 carries the N6-succinyllysine; alternate modification. ATP is bound by residues K60 and 67–69 (GRG). An N6-acetyllysine mark is found at K91, K101, K105, and K178. 2 residues coordinate Mg(2+): N220 and D234. S241 carries the post-translational modification Phosphoserine. Substrate is bound at residue N285. T303 carries the post-translational modification Phosphothreonine. An N6-acetyllysine modification is found at K330. 342–344 (GIM) is a binding site for substrate. K400 is modified (N6-acetyllysine).

The protein belongs to the succinate/malate CoA ligase beta subunit family. ATP-specific subunit beta subfamily. In terms of assembly, heterodimer of an alpha and a beta subunit. The beta subunit determines specificity for ATP. Interacts with ALAS2. The cofactor is Mg(2+).

It is found in the mitochondrion. The catalysed reaction is succinate + ATP + CoA = succinyl-CoA + ADP + phosphate. The protein operates within carbohydrate metabolism; tricarboxylic acid cycle; succinate from succinyl-CoA (ligase route): step 1/1. Functionally, ATP-specific succinyl-CoA synthetase functions in the citric acid cycle (TCA), coupling the hydrolysis of succinyl-CoA to the synthesis of ATP and thus represents the only step of substrate-level phosphorylation in the TCA. The beta subunit provides nucleotide specificity of the enzyme and binds the substrate succinate, while the binding sites for coenzyme A and phosphate are found in the alpha subunit. The protein is Succinate--CoA ligase [ADP-forming] subunit beta, mitochondrial of Sus scrofa (Pig).